A 369-amino-acid polypeptide reads, in one-letter code: Glutamate 5-kinase (369 aa).

Residue K9 participates in ATP binding. Substrate is bound by residues S49, D136, and N148. Residues 168 to 169 and 210 to 216 each bind ATP; these read TD and TGGMLTK. The PUA domain maps to 275–355; it reads RGSVYVDEGA…KGVFIHRDDW (81 aa).

Belongs to the glutamate 5-kinase family.

The protein localises to the cytoplasm. It carries out the reaction L-glutamate + ATP = L-glutamyl 5-phosphate + ADP. It functions in the pathway amino-acid biosynthesis; L-proline biosynthesis; L-glutamate 5-semialdehyde from L-glutamate: step 1/2. Functionally, catalyzes the transfer of a phosphate group to glutamate to form L-glutamate 5-phosphate. The protein is Glutamate 5-kinase of Neisseria meningitidis serogroup B (strain ATCC BAA-335 / MC58).